Consider the following 232-residue polypeptide: Ubiquinone biosynthesis O-methyltransferase (232 aa).

Residues arginine 36, glycine 55, aspartate 76, and methionine 120 each contribute to the S-adenosyl-L-methionine site.

The protein belongs to the methyltransferase superfamily. UbiG/COQ3 family.

It catalyses the reaction a 3-demethylubiquinol + S-adenosyl-L-methionine = a ubiquinol + S-adenosyl-L-homocysteine + H(+). The catalysed reaction is a 3-(all-trans-polyprenyl)benzene-1,2-diol + S-adenosyl-L-methionine = a 2-methoxy-6-(all-trans-polyprenyl)phenol + S-adenosyl-L-homocysteine + H(+). It functions in the pathway cofactor biosynthesis; ubiquinone biosynthesis. In terms of biological role, O-methyltransferase that catalyzes the 2 O-methylation steps in the ubiquinone biosynthetic pathway. This chain is Ubiquinone biosynthesis O-methyltransferase, found in Chromobacterium violaceum (strain ATCC 12472 / DSM 30191 / JCM 1249 / CCUG 213 / NBRC 12614 / NCIMB 9131 / NCTC 9757 / MK).